Reading from the N-terminus, the 1597-residue chain is THO complex subunit 2 (1597 aa).

2 disordered regions span residues 1250–1274 (KSQRLQNDPPKSVASGSAGLNSKDR) and 1384–1597 (EPYP…RYQR). The span at 1419-1430 (GSSNYRGPSNDR) shows a compositional bias: polar residues. 4 stretches are compositionally biased toward basic and acidic residues: residues 1458-1490 (TYNDRSRALRPTGPDRGDGFDQRDNRLREEYKK), 1500-1512 (FPEKPFQEGKDSS), 1522-1545 (YKRDSPSENEEKPNKRFKKDETIR), and 1554-1567 (RNTRDSGAAHRANE). Residues 1568–1582 (NQRYNGNRKSNTQAL) show a composition bias toward polar residues.

This sequence belongs to the THOC2 family. As to quaternary structure, component of the THO complex, which is composed of HPR1, MFT1, THO2 and THP2. Together with SUB2, TEX1 and YRA1, THO forms the transcription/export (TREX) complex. THO associates with DNA and RNA in vitro.

It localises to the nucleus. In terms of biological role, component the THO subcomplex of the TREX complex, which operates in coupling transcription elongation to mRNA export. The THO complex is recruited to transcribed genes and moves along the gene with the elongating polymerase during transcription. THO is important for stabilizing nascent RNA in the RNA polymerase II elongation complex by preventing formation of DNA:RNA hybrids behind the elongating polymerase. It functions in cotranscriptional formation of an export-competent messenger ribonucleoprotein particle (mRNP) by facilitating the loading of ATP-dependent RNA helicase SUB2 and the mRNA export factor YRA1 along the nascent mRNA. The polypeptide is THO complex subunit 2 (THO2) (Saccharomyces cerevisiae (strain ATCC 204508 / S288c) (Baker's yeast)).